The sequence spans 1074 residues: Collagen, type I, alpha 1a (1074 aa).

Residues 1 to 13 (KSPAMPVPGPMGP) show a composition bias toward pro residues. Residues 1–1010 (KSPAMPVPGP…PQEKAPDPYR (1010 aa)) form a disordered region. The segment covering 14 to 36 (MGPRSGPQGFPGEAGAAGAMGPR) has biased composition (low complexity). The segment covering 45-59 (NGEDGESGKPGRGGE) has biased composition (basic and acidic residues). The span at 129–147 (TGAAGAAGARGNDGAAGAA) shows a compositional bias: low complexity. Residues 149–162 (PPGPTGPAGPPGFP) are compositionally biased toward pro residues. Gly residues predominate over residues 163 to 181 (GGPGAKGDAGAQGGRGPEG). 3 stretches are compositionally biased toward low complexity: residues 182–225 (PAGA…AGAP), 234–272 (SGPQ…APGV), and 290–299 (EPGAAGARGA). Positions 301 to 313 (GERGGPGGRGFPG) are enriched in gly residues. 3 stretches are compositionally biased toward low complexity: residues 377–392 (VGAR…PGPK), 469–530 (VPGE…QGMP), and 563–578 (RGLT…AGAT). Gly residues predominate over residues 588–597 (GPVGPGGARG). Low complexity-rich tracts occupy residues 611 to 647 (AGFA…AGPT) and 661 to 683 (PKGA…AGRV). Pro residues predominate over residues 685–697 (PPGPSGNPGPPGP). Low complexity-rich tracts occupy residues 715-742 (PAGR…SEGA) and 803-823 (PGLA…SEGS). A compositionally biased stretch (pro residues) spans 847–857 (APGPPGAPGPV). The span at 871–890 (PAGPAGSAGPAGPRGPAGAP) shows a compositional bias: low complexity. A compositionally biased stretch (basic and acidic residues) spans 893–907 (RGDKGESGEAGERGH). Positions 920–956 (SGSSGEQGPAGAAGPAGPRGPAGSAGSPGKDGMSGLP) are enriched in low complexity. The segment covering 974-986 (AGPPGPPGPPGAP) has biased composition (pro residues). One can recognise a Fibrillar collagen NC1 domain in the interval 1014-1074 (LEVDSTLKSL…GLEVGPVCFL (61 aa)).

The protein belongs to the fibrillar collagen family.

It localises to the secreted. The protein resides in the extracellular space. Its subcellular location is the extracellular matrix. The sequence is that of Collagen, type I, alpha 1a from Epinephelus marginatus (Dusky grouper).